A 698-amino-acid polypeptide reads, in one-letter code: Polyribonucleotide nucleotidyltransferase (698 aa).

Mg(2+) is bound by residues aspartate 486 and aspartate 492. The KH domain occupies 553–612 (PRIIVRNIPKDRIGELIGPGGKNVRGISELTGAELYIEDDGKVTISGSNQESAEKAAKMV). One can recognise an S1 motif domain in the interval 622 to 690 (GKIYEGKVKR…KTGKIDLSRK (69 aa)).

It belongs to the polyribonucleotide nucleotidyltransferase family. The cofactor is Mg(2+).

It localises to the cytoplasm. The catalysed reaction is RNA(n+1) + phosphate = RNA(n) + a ribonucleoside 5'-diphosphate. Involved in mRNA degradation. Catalyzes the phosphorolysis of single-stranded polyribonucleotides processively in the 3'- to 5'-direction. The protein is Polyribonucleotide nucleotidyltransferase of Leptospira interrogans serogroup Icterohaemorrhagiae serovar copenhageni (strain Fiocruz L1-130).